The sequence spans 479 residues: Galactosylgalactosylxylosylprotein 3-beta-glucuronosyltransferase P (479 aa).

The Cytoplasmic segment spans residues 1–34; the sequence is MKGGNYTSLGTCSGINVSGNVAGTRKMSLGKSIK. The chain crosses the membrane as a helical; Signal-anchor for type II membrane protein span at residues 35-50; it reads MYLTIFILTTCIYMAL. Over 51 to 479 the chain is Lumenal; the sequence is YQYHISREPF…EHIDRLLVRP (429 aa). N-linked (GlcNAc...) asparagine glycosylation is found at N90, N97, N98, and N271. The span at 94–120 shows a compositional bias: low complexity; the sequence is NTNNNSTTTSTTTTTAPTTPTTTTTTT. The segment at 94–122 is disordered; that stretch reads NTNNNSTTTSTTTTTAPTTPTTTTTTTVG. D335 serves as a coordination point for Mn(2+). Catalysis depends on E418, which acts as the Proton acceptor. An N-linked (GlcNAc...) asparagine glycan is attached at N460.

The protein belongs to the glycosyltransferase 43 family. Mn(2+) serves as cofactor.

Its subcellular location is the golgi apparatus membrane. The catalysed reaction is 3-O-(beta-D-galactosyl-(1-&gt;3)-beta-D-galactosyl-(1-&gt;4)-beta-D-xylosyl)-L-seryl-[protein] + UDP-alpha-D-glucuronate = 3-O-(beta-D-GlcA-(1-&gt;3)-beta-D-Gal-(1-&gt;3)-beta-D-Gal-(1-&gt;4)-beta-D-Xyl)-L-seryl-[protein] + UDP + H(+). The protein operates within protein modification; protein glycosylation. Involved in the biosynthesis of L2/HNK-1 carbohydrate epitope on both glycolipids and glycoproteins. Enzyme has a broad specificity. The chain is Galactosylgalactosylxylosylprotein 3-beta-glucuronosyltransferase P (GlcAT-P) from Drosophila melanogaster (Fruit fly).